The primary structure comprises 196 residues: Holliday junction branch migration complex subunit RuvA (196 aa).

The segment at Met-1 to His-63 is domain I. A domain II region spans residues Thr-64 to Arg-142. The segment at Lys-143–Gln-148 is flexible linker. The domain III stretch occupies residues Gln-148–Lys-196.

It belongs to the RuvA family. In terms of assembly, homotetramer. Forms an RuvA(8)-RuvB(12)-Holliday junction (HJ) complex. HJ DNA is sandwiched between 2 RuvA tetramers; dsDNA enters through RuvA and exits via RuvB. An RuvB hexamer assembles on each DNA strand where it exits the tetramer. Each RuvB hexamer is contacted by two RuvA subunits (via domain III) on 2 adjacent RuvB subunits; this complex drives branch migration. In the full resolvosome a probable DNA-RuvA(4)-RuvB(12)-RuvC(2) complex forms which resolves the HJ.

The protein resides in the cytoplasm. The RuvA-RuvB-RuvC complex processes Holliday junction (HJ) DNA during genetic recombination and DNA repair, while the RuvA-RuvB complex plays an important role in the rescue of blocked DNA replication forks via replication fork reversal (RFR). RuvA specifically binds to HJ cruciform DNA, conferring on it an open structure. The RuvB hexamer acts as an ATP-dependent pump, pulling dsDNA into and through the RuvAB complex. HJ branch migration allows RuvC to scan DNA until it finds its consensus sequence, where it cleaves and resolves the cruciform DNA. In Streptococcus agalactiae serotype Ia (strain ATCC 27591 / A909 / CDC SS700), this protein is Holliday junction branch migration complex subunit RuvA.